A 481-amino-acid polypeptide reads, in one-letter code: UDP-glycosyltransferase 85C2 (481 aa).

The active-site Proton acceptor is the histidine 23. Position 23 (histidine 23) interacts with an anthocyanidin. Aspartate 120 acts as the Charge relay in catalysis. Residues threonine 143, glutamine 362, histidine 377, tryptophan 380, serine 382, glutamate 385, aspartate 401, and glutamine 402 each coordinate UDP-alpha-D-glucose.

This sequence belongs to the UDP-glycosyltransferase family.

It carries out the reaction steviol + UDP-alpha-D-glucose = steviolmonoside + UDP + H(+). It catalyses the reaction steviolmonoside + UDP-alpha-D-glucose = rubusoside + UDP. In terms of biological role, involved in the biosynthesis of steviol glycosides in leaves. Converts steviol to the mono-glycoside steviolmonoside. Converts the mono-glycoside steviolmonoside to the bi-glycoside rubusoside. The chain is UDP-glycosyltransferase 85C2 from Stevia rebaudiana (Stevia).